The following is a 319-amino-acid chain: Dehydrogenase/reductase SDR family member 9 (319 aa).

The N-terminal stretch at 1–20 (MLLWVLALLFLCAFLWNYKG) is a signal peptide. NAD(+) contacts are provided by residues 34–58 (ITGCDSGFGNLAARTFDRKGFRVIA) and aspartate 83. Serine 164 serves as a coordination point for substrate. The active-site Proton acceptor is the tyrosine 176. Position 180 (lysine 180) interacts with NAD(+).

It belongs to the short-chain dehydrogenases/reductases (SDR) family. As to quaternary structure, homotetramer. Highly expressed in epithelium of estrus uterus.

It is found in the microsome membrane. The protein localises to the endoplasmic reticulum membrane. It catalyses the reaction 3beta-hydroxy-5alpha-pregnane-20-one + NAD(+) = 5alpha-pregnane-3,20-dione + NADH + H(+). The enzyme catalyses 17beta-hydroxy-5alpha-androstan-3-one + NAD(+) = 5alpha-androstan-3,17-dione + NADH + H(+). The catalysed reaction is androsterone + NAD(+) = 5alpha-androstan-3,17-dione + NADH + H(+). It carries out the reaction 5alpha-androstane-3alpha,17beta-diol + NAD(+) = 17beta-hydroxy-5alpha-androstan-3-one + NADH + H(+). It catalyses the reaction all-trans-retinol + NAD(+) = all-trans-retinal + NADH + H(+). The enzyme catalyses 3alpha-hydroxy-5alpha-pregnan-20-one + NAD(+) = 5alpha-pregnane-3,20-dione + NADH + H(+). 3-alpha-hydroxysteroid dehydrogenase that converts 3-alpha-tetrahydroprogesterone (allopregnanolone) to dihydroxyprogesterone and 3-alpha-androstanediol to dihydroxyprogesterone. Plays also role in the biosynthesis of retinoic acid from retinaldehyde. Can utilize both NADH and NADPH. This chain is Dehydrogenase/reductase SDR family member 9 (Dhrs9), found in Rattus norvegicus (Rat).